We begin with the raw amino-acid sequence, 398 residues long: 2-amino-3-ketobutyrate coenzyme A ligase (398 aa).

Pyridoxal 5'-phosphate is bound at residue C111–F112. H136 is a substrate binding site. Residues S185, D210–H213, T241–K244, and S274–N275 contribute to the pyridoxal 5'-phosphate site. K244 is modified (N6-(pyridoxal phosphate)lysine). R368 serves as a coordination point for substrate.

Belongs to the class-II pyridoxal-phosphate-dependent aminotransferase family. As to quaternary structure, homodimer. It depends on pyridoxal 5'-phosphate as a cofactor.

The enzyme catalyses glycine + acetyl-CoA = (2S)-2-amino-3-oxobutanoate + CoA. It participates in amino-acid degradation; L-threonine degradation via oxydo-reductase pathway; glycine from L-threonine: step 2/2. In terms of biological role, catalyzes the cleavage of 2-amino-3-ketobutyrate to glycine and acetyl-CoA. In Escherichia coli (strain K12), this protein is 2-amino-3-ketobutyrate coenzyme A ligase.